Consider the following 147-residue polypeptide: Large ribosomal subunit protein bL9 (147 aa).

It belongs to the bacterial ribosomal protein bL9 family.

Its function is as follows. Binds to the 23S rRNA. The sequence is that of Large ribosomal subunit protein bL9 from Bacteroides fragilis (strain ATCC 25285 / DSM 2151 / CCUG 4856 / JCM 11019 / LMG 10263 / NCTC 9343 / Onslow / VPI 2553 / EN-2).